Reading from the N-terminus, the 574-residue chain is Isocitrate dehydrogenase kinase/phosphatase (574 aa).

ATP is bound by residues 311 to 317 (APGIRGM) and Lys-332. Asp-367 is a catalytic residue.

This sequence belongs to the AceK family.

It is found in the cytoplasm. It catalyses the reaction L-seryl-[isocitrate dehydrogenase] + ATP = O-phospho-L-seryl-[isocitrate dehydrogenase] + ADP + H(+). Functionally, bifunctional enzyme which can phosphorylate or dephosphorylate isocitrate dehydrogenase (IDH) on a specific serine residue. This is a regulatory mechanism which enables bacteria to bypass the Krebs cycle via the glyoxylate shunt in response to the source of carbon. When bacteria are grown on glucose, IDH is fully active and unphosphorylated, but when grown on acetate or ethanol, the activity of IDH declines drastically concomitant with its phosphorylation. The protein is Isocitrate dehydrogenase kinase/phosphatase of Shigella boydii serotype 4 (strain Sb227).